The chain runs to 402 residues: CCA-adding enzyme (402 aa).

ATP-binding residues include Gly-32 and Arg-35. 2 residues coordinate CTP: Gly-32 and Arg-35. The Mg(2+) site is built by Asp-45 and Asp-47. The ATP site is built by Arg-116, Asp-159, Arg-162, Arg-165, and Arg-168. Positions 116, 159, 162, 165, and 168 each coordinate CTP.

The protein belongs to the tRNA nucleotidyltransferase/poly(A) polymerase family. Bacterial CCA-adding enzyme type 3 subfamily. Homodimer. The cofactor is Mg(2+).

The catalysed reaction is a tRNA precursor + 2 CTP + ATP = a tRNA with a 3' CCA end + 3 diphosphate. It catalyses the reaction a tRNA with a 3' CCA end + 2 CTP + ATP = a tRNA with a 3' CCACCA end + 3 diphosphate. Functionally, catalyzes the addition and repair of the essential 3'-terminal CCA sequence in tRNAs without using a nucleic acid template. Adds these three nucleotides in the order of C, C, and A to the tRNA nucleotide-73, using CTP and ATP as substrates and producing inorganic pyrophosphate. tRNA 3'-terminal CCA addition is required both for tRNA processing and repair. Also involved in tRNA surveillance by mediating tandem CCA addition to generate a CCACCA at the 3' terminus of unstable tRNAs. While stable tRNAs receive only 3'-terminal CCA, unstable tRNAs are marked with CCACCA and rapidly degraded. This Streptococcus pyogenes serotype M1 protein is CCA-adding enzyme.